The sequence spans 260 residues: Membrane protein insertase YidC 1 (260 aa).

The signal sequence occupies residues 1–22 (MLKSYRAVLVSLSLLFVFVLSG). Residue Cys-23 is the site of N-palmitoyl cysteine attachment. Cys-23 carries S-diacylglycerol cysteine lipidation. The next 5 membrane-spanning stretches (helical) occupy residues 29 to 49 (IDAHSTGIWDHYFVYPISFMI), 52 to 72 (VAHHIPGASFGIAIIIMTLVI), 133 to 153 (LAGCWPLLIQMPIFSALYYAI), 164 to 184 (FLWVNLGHADPYHILPIIAAL), and 213 to 233 (MPAMILFMGFAAPSGLVLYWI).

Belongs to the OXA1/ALB3/YidC family. Type 2 subfamily.

The protein localises to the cell membrane. Required for the insertion and/or proper folding and/or complex formation of integral membrane proteins into the membrane. Involved in integration of membrane proteins that insert both dependently and independently of the Sec translocase complex, as well as at least some lipoproteins. This chain is Membrane protein insertase YidC 1, found in Bacillus cereus (strain ATCC 14579 / DSM 31 / CCUG 7414 / JCM 2152 / NBRC 15305 / NCIMB 9373 / NCTC 2599 / NRRL B-3711).